A 125-amino-acid polypeptide reads, in one-letter code: Period circadian protein (125 aa).

Residues 1–125 form a disordered region; that stretch reads EGSGGSGSSG…VTLTESLLNK (125 aa). 3 tandem repeats follow at residues 30–31, 33–34, and 35–36. A compositionally biased stretch (gly residues) spans 30-84; that stretch reads GTGGTGTNTGTNTGTGTGTGTGTGTGTGTGTGTGTGTGTGTGTGTGTGKGAGAGT. Residues 30–86 are 28 X 2 AA approximate tandem repeats of G-[TA]; that stretch reads GTGGTGTNTGTNTGTGTGTGTGTGTGTGTGTGTGTGTGTGTGTGTGTGKGAGAGTGT. One copy of the 4; approximate repeat lies at 37–38; the sequence is NT. Repeat unit 5 spans residues 39 to 40; that stretch reads GT. The 6; approximate repeat unit spans residues 41–42; the sequence is NT. A run of 17 repeats spans residues 43–44, 45–46, 47–48, 49–50, 51–52, 53–54, 55–56, 57–58, 59–60, 61–62, 63–64, 65–66, 67–68, 69–70, 71–72, 73–74, and 75–76. The 24; approximate repeat unit spans residues 77-78; sequence GK. A run of 4 repeats spans residues 79–80, 81–82, 83–84, and 85–86. Residues 85-112 show a composition bias toward low complexity; it reads GTATNETAGPGTTTTTTTRSTTTAATAA. A compositionally biased stretch (polar residues) spans 116 to 125; that stretch reads VTLTESLLNK.

As to quaternary structure, forms a heterodimer with timeless (TIM); the complex then translocates into the nucleus. Phosphorylated with a circadian rhythmicity, probably by the double-time protein (dbt). Phosphorylation could be implicated in the stability of per monomer and in the formation of heterodimer per-tim.

The protein localises to the nucleus. It is found in the cytoplasm. Its subcellular location is the perinuclear region. Functionally, essential for biological clock functions. Determines the period length of circadian and ultradian rhythms; an increase in PER dosage leads to shortened circadian rhythms and a decrease leads to lengthened circadian rhythms. Essential for the circadian rhythmicity of locomotor activity, eclosion behavior, and for the rhythmic component of the male courtship song that originates in the thoracic nervous system. The biological cycle depends on the rhythmic formation and nuclear localization of the TIM-PER complex. Light induces the degradation of TIM, which promotes elimination of PER. Nuclear activity of the heterodimer coordinatively regulates PER and TIM transcription through a negative feedback loop. Behaves as a negative element in circadian transcriptional loop. Does not appear to bind DNA, suggesting indirect transcriptional inhibition. This chain is Period circadian protein (per), found in Drosophila ananassae (Fruit fly).